Consider the following 313-residue polypeptide: tRNA-cytidine(32) 2-sulfurtransferase (313 aa).

The PP-loop motif signature appears at 54-59 (SGGKDS). [4Fe-4S] cluster-binding residues include Cys129, Cys132, and Cys220.

This sequence belongs to the TtcA family. In terms of assembly, homodimer. Requires Mg(2+) as cofactor. It depends on [4Fe-4S] cluster as a cofactor.

It is found in the cytoplasm. It carries out the reaction cytidine(32) in tRNA + S-sulfanyl-L-cysteinyl-[cysteine desulfurase] + AH2 + ATP = 2-thiocytidine(32) in tRNA + L-cysteinyl-[cysteine desulfurase] + A + AMP + diphosphate + H(+). It functions in the pathway tRNA modification. Catalyzes the ATP-dependent 2-thiolation of cytidine in position 32 of tRNA, to form 2-thiocytidine (s(2)C32). The sulfur atoms are provided by the cysteine/cysteine desulfurase (IscS) system. This chain is tRNA-cytidine(32) 2-sulfurtransferase, found in Methylibium petroleiphilum (strain ATCC BAA-1232 / LMG 22953 / PM1).